A 134-amino-acid polypeptide reads, in one-letter code: Profilin-2 (134 aa).

A disulfide bridge connects residues C13 and C118. The Involved in PIP2 interaction motif lies at 84-100 (AVIRGKKGSGGITIKKT). The residue at position 114 (T114) is a Phosphothreonine.

Belongs to the profilin family. As to quaternary structure, occurs in many kinds of cells as a complex with monomeric actin in a 1:1 ratio. Post-translationally, phosphorylated by MAP kinases.

Its subcellular location is the cytoplasm. The protein resides in the cytoskeleton. Functionally, binds to actin and affects the structure of the cytoskeleton. At high concentrations, profilin prevents the polymerization of actin, whereas it enhances it at low concentrations. The protein is Profilin-2 of Olea europaea (Common olive).